Here is a 127-residue protein sequence, read N- to C-terminus: Holo-[acyl-carrier-protein] synthase (127 aa).

2 residues coordinate Mg(2+): Asp8 and Glu57.

It belongs to the P-Pant transferase superfamily. AcpS family. Mg(2+) is required as a cofactor.

Its subcellular location is the cytoplasm. The enzyme catalyses apo-[ACP] + CoA = holo-[ACP] + adenosine 3',5'-bisphosphate + H(+). Its function is as follows. Transfers the 4'-phosphopantetheine moiety from coenzyme A to a Ser of acyl-carrier-protein. The sequence is that of Holo-[acyl-carrier-protein] synthase from Hydrogenovibrio crunogenus (strain DSM 25203 / XCL-2) (Thiomicrospira crunogena).